Here is a 346-residue protein sequence, read N- to C-terminus: Phenylalanine--tRNA ligase alpha subunit (346 aa).

Glutamate 261 serves as a coordination point for Mg(2+).

Belongs to the class-II aminoacyl-tRNA synthetase family. Phe-tRNA synthetase alpha subunit type 1 subfamily. Tetramer of two alpha and two beta subunits. Mg(2+) serves as cofactor.

It localises to the cytoplasm. It carries out the reaction tRNA(Phe) + L-phenylalanine + ATP = L-phenylalanyl-tRNA(Phe) + AMP + diphosphate + H(+). This chain is Phenylalanine--tRNA ligase alpha subunit, found in Dehalococcoides mccartyi (strain ATCC BAA-2100 / JCM 16839 / KCTC 5957 / BAV1).